Here is a 445-residue protein sequence, read N- to C-terminus: Phosphoglucosamine mutase (445 aa).

Residue serine 102 is the Phosphoserine intermediate of the active site. Mg(2+) contacts are provided by serine 102, aspartate 241, aspartate 243, and aspartate 245. Serine 102 is subject to Phosphoserine.

This sequence belongs to the phosphohexose mutase family. Mg(2+) serves as cofactor. Activated by phosphorylation.

It carries out the reaction alpha-D-glucosamine 1-phosphate = D-glucosamine 6-phosphate. Catalyzes the conversion of glucosamine-6-phosphate to glucosamine-1-phosphate. This Sodalis glossinidius (strain morsitans) protein is Phosphoglucosamine mutase.